Reading from the N-terminus, the 605-residue chain is Adenine deaminase (605 aa).

This sequence belongs to the metallo-dependent hydrolases superfamily. Adenine deaminase family. It depends on Mn(2+) as a cofactor.

The enzyme catalyses adenine + H2O + H(+) = hypoxanthine + NH4(+). The protein is Adenine deaminase of Staphylothermus marinus (strain ATCC 43588 / DSM 3639 / JCM 9404 / F1).